The primary structure comprises 298 residues: Quinolinate synthase (298 aa).

His19 and Ser36 together coordinate iminosuccinate. Residue Cys81 coordinates [4Fe-4S] cluster. Residues 107–109 (YVN) and Ser124 each bind iminosuccinate. [4Fe-4S] cluster is bound at residue Cys168. Iminosuccinate is bound by residues 193-195 (HPE) and Thr210. [4Fe-4S] cluster is bound at residue Cys254.

It belongs to the quinolinate synthase family. Type 2 subfamily. [4Fe-4S] cluster serves as cofactor.

The protein resides in the cytoplasm. The catalysed reaction is iminosuccinate + dihydroxyacetone phosphate = quinolinate + phosphate + 2 H2O + H(+). It functions in the pathway cofactor biosynthesis; NAD(+) biosynthesis; quinolinate from iminoaspartate: step 1/1. In terms of biological role, catalyzes the condensation of iminoaspartate with dihydroxyacetone phosphate to form quinolinate. In Thermotoga sp. (strain RQ2), this protein is Quinolinate synthase.